The sequence spans 2537 residues: Centrosomal protein of 192 kDa (2537 aa).

Disordered stretches follow at residues 69 to 138 and 288 to 308; these read FSVP…ATES and HSSETTHKESEESQVICLPGT. Positions 70 to 81 are enriched in low complexity; it reads SVPSGSSPGSQS. A compositionally biased stretch (polar residues) spans 106–122; that stretch reads VESQRLSNALSKQSALQ. Basic and acidic residues predominate over residues 288–298; the sequence is HSSETTHKESE. S812 carries the phosphoserine modification. Disordered stretches follow at residues 950 to 1021, 1043 to 1064, 1101 to 1158, and 1182 to 1234; these read VTFE…QQQP, VSEPESSYPTTATDDALEDRKS, KGTL…WTSN, and ATSH…STVH. A compositionally biased stretch (polar residues) spans 960–970; sequence PKNSDLKNTSP. A compositionally biased stretch (low complexity) spans 984-1005; that stretch reads FRPSTSPLSHSSPSEISGTSSS. 2 stretches are compositionally biased toward polar residues: residues 1046–1055 and 1103–1112; these read PESSYPTTAT and TLSSIIQNNS. Over residues 1128-1141 the composition is skewed to basic and acidic residues; sequence EYVKPDFRWSKDPS. A compositionally biased stretch (polar residues) spans 1142–1158; that stretch reads SKSGNLLETSEVGWTSN. A compositionally biased stretch (basic and acidic residues) spans 1195 to 1207; that stretch reads EDQRISPKDKSTA. Residues 1213–1234 are compositionally biased toward polar residues; sequence GQVSHQTTSENQCTPIPSSTVH. 3 positions are modified to phosphoserine: S1755, S2098, and S2110. Position 2313 is a hydroxyproline (P2313).

In terms of assembly, interacts with SHBG. Interacts with PLK4; this interaction mediates the formation of a ternary complex composed by PLK4, TENT5C and CEP192. Interacts with CCDC66. Post-translationally, hydroxylation by PHD1/EGLN2 at Pro-2313 promotes ubiquitination. In terms of processing, ubiquitinated by a SCF(SKP2) complex following proline hydroxylation. Ubiquitinated in a FBXL13-dependent manner, leading to proteasomal degradation.

The protein resides in the cytoplasm. Its subcellular location is the cytoskeleton. It localises to the microtubule organizing center. It is found in the centrosome. The protein localises to the centriole. Functionally, required for mitotic centrosome maturation and bipolar spindle assembly. Appears to be a major regulator of pericentriolar material (PCM) recruitment, centrosome maturation, and centriole duplication. Centrosome-specific activating scaffold for AURKA and PLK1. This is Centrosomal protein of 192 kDa from Homo sapiens (Human).